Consider the following 154-residue polypeptide: Style cell-cycle inhibitor 1-A (154 aa).

2 stretches are compositionally biased toward basic and acidic residues: residues 1 to 11 (MGSDKKTPEEK) and 24 to 48 (DEVKSKRQNIKGDEERRKEKKDKSK). The interval 1–84 (MGSDKKTPEE…DKSKNKFEEL (84 aa)) is disordered. A compositionally biased stretch (basic residues) spans 63 to 77 (GEKHKTKSHKHKDKS).

Specifically expressed in flowers pistils, especially in stigmas and styles. Barely detected in roots, stems, leaves, sepals, petals and stamen.

The protein resides in the nucleus. Its function is as follows. Component of the auxin signaling transduction pathway that regulates cell proliferation and differentiation during flowers stigmas and styles development. Involved in the regulation of auxin-related genes. The sequence is that of Style cell-cycle inhibitor 1-A from Nicotiana tabacum (Common tobacco).